A 479-amino-acid chain; its full sequence is Ribosomal RNA small subunit methyltransferase F (479 aa).

S-adenosyl-L-methionine is bound by residues 125–131 (AAAPGSK), Glu149, Asp176, and Asp194. Cys247 serves as the catalytic Nucleophile.

It belongs to the class I-like SAM-binding methyltransferase superfamily. RsmB/NOP family.

The protein resides in the cytoplasm. The catalysed reaction is cytidine(1407) in 16S rRNA + S-adenosyl-L-methionine = 5-methylcytidine(1407) in 16S rRNA + S-adenosyl-L-homocysteine + H(+). Specifically methylates the cytosine at position 1407 (m5C1407) of 16S rRNA. In Escherichia coli (strain K12), this protein is Ribosomal RNA small subunit methyltransferase F (rsmF).